Reading from the N-terminus, the 200-residue chain is Cleavage and polyadenylation specificity factor subunit 5 (200 aa).

The 126-residue stretch at 45 to 170 (LRKAVEGIII…LSLIAVSLYE (126 aa)) folds into the Nudix hydrolase domain. The interaction with RNA stretch occupies residues 70-72 (NYF). The short motif at 77-98 (GKLKPGENEIDGLIRKLTKKLS) is the Nudix box element.

It belongs to the Nudix hydrolase family. CPSF5 subfamily. As to quaternary structure, homodimer (via N- and C-terminus); binds RNA as homodimer. Component of the cleavage factor Im (CFIm) complex.

It is found in the nucleus. The protein resides in the cytoplasm. Its function is as follows. Component of the cleavage factor Im (CFIm) complex that functions as an activator of the pre-mRNA 3'-end cleavage and polyadenylation processing required for the maturation of pre-mRNA into functional mRNAs. CFIm contributes to the recruitment of multiprotein complexes on specific sequences on the pre-mRNA 3'-end, so called cleavage and polyadenylation signals (pA signals). Most pre-mRNAs contain multiple pA signals, resulting in alternative cleavage and polyadenylation (APA) producing mRNAs with variable 3'-end formation. The CFIm complex acts as a key regulator of cleavage and polyadenylation site choice during APA through its binding to 5'-UGUA-3' elements localized in the 3'-untranslated region (UTR) for a huge number of pre-mRNAs. Binds to 5'-UGUA-3' elements localized upstream of pA signals that act as enhancers of pre-mRNA 3'-end processing. The homodimer mediates simultaneous sequence-specific recognition of two 5'-UGUA-3' elements within the pre-mRNA. Plays a role in somatic cell fate transitions and pluripotency by regulating widespread changes in gene expression through an APA-dependent function. Binds to chromatin. The polypeptide is Cleavage and polyadenylation specificity factor subunit 5 (Dictyostelium discoideum (Social amoeba)).